A 158-amino-acid polypeptide reads, in one-letter code: Putative ribosomal RNA large subunit methyltransferase H (158 aa).

Residues Leu-76, Gly-107, and 126-131 (LSRMTF) each bind S-adenosyl-L-methionine.

The protein belongs to the RNA methyltransferase RlmH family.

Its subcellular location is the cytoplasm. The catalysed reaction is pseudouridine(1915) in 23S rRNA + S-adenosyl-L-methionine = N(3)-methylpseudouridine(1915) in 23S rRNA + S-adenosyl-L-homocysteine + H(+). Functionally, specifically methylates the pseudouridine at position 1915 (m3Psi1915) in 23S rRNA. In Methanocorpusculum labreanum (strain ATCC 43576 / DSM 4855 / Z), this protein is Putative ribosomal RNA large subunit methyltransferase H.